The following is a 125-amino-acid chain: Large ribosomal subunit protein bL12 (125 aa).

It belongs to the bacterial ribosomal protein bL12 family. In terms of assembly, homodimer. Part of the ribosomal stalk of the 50S ribosomal subunit. Forms a multimeric L10(L12)X complex, where L10 forms an elongated spine to which 2 to 4 L12 dimers bind in a sequential fashion. Binds GTP-bound translation factors.

Its function is as follows. Forms part of the ribosomal stalk which helps the ribosome interact with GTP-bound translation factors. Is thus essential for accurate translation. The protein is Large ribosomal subunit protein bL12 of Syntrophomonas wolfei subsp. wolfei (strain DSM 2245B / Goettingen).